The primary structure comprises 452 residues: 23S rRNA (uracil(1939)-C(5))-methyltransferase RlmD (452 aa).

The tract at residues 1 to 25 (MSKKKSNSGLRFQPAGGNRTPQVPV) is disordered. Residues 22 to 80 (QVPVGKKQRLDIERLAGDGRGIAFLDGRTWFVSGALAGEAVEARVLNARGKVVEARLER) enclose the TRAM domain. [4Fe-4S] cluster is bound by residues Cys93, Cys99, Cys102, and Cys181. S-adenosyl-L-methionine is bound by residues Gln285, Phe314, Asn319, Glu335, Asp362, and Asp383. Residue Cys409 is the Nucleophile of the active site.

Belongs to the class I-like SAM-binding methyltransferase superfamily. RNA M5U methyltransferase family. RlmD subfamily.

It catalyses the reaction uridine(1939) in 23S rRNA + S-adenosyl-L-methionine = 5-methyluridine(1939) in 23S rRNA + S-adenosyl-L-homocysteine + H(+). Functionally, catalyzes the formation of 5-methyl-uridine at position 1939 (m5U1939) in 23S rRNA. In Pseudomonas putida (strain ATCC 47054 / DSM 6125 / CFBP 8728 / NCIMB 11950 / KT2440), this protein is 23S rRNA (uracil(1939)-C(5))-methyltransferase RlmD.